Reading from the N-terminus, the 217-residue chain is Small ribosomal subunit protein uS3 (217 aa).

A KH type-2 domain is found at 38-106; sequence IRKFIQKELA…QVHINIVEIK (69 aa).

Belongs to the universal ribosomal protein uS3 family. Part of the 30S ribosomal subunit. Forms a tight complex with proteins S10 and S14.

In terms of biological role, binds the lower part of the 30S subunit head. Binds mRNA in the 70S ribosome, positioning it for translation. The sequence is that of Small ribosomal subunit protein uS3 from Streptococcus thermophilus (strain CNRZ 1066).